Here is a 312-residue protein sequence, read N- to C-terminus: Nodulation protein D 2 (312 aa).

The HTH lysR-type domain maps to Leu-6–Thr-63. The segment at residues Val-23–Ala-42 is a DNA-binding region (H-T-H motif).

The protein belongs to the LysR transcriptional regulatory family.

Represses the expression of the nodABCIJ-nolO-noeI operon. This is Nodulation protein D 2 (nodD2) from Sinorhizobium fredii (strain NBRC 101917 / NGR234).